The sequence spans 649 residues: MEPSGSEQLYEDPDPGGKSQDAEARRQTESEQKLSKMTHNALENINVIGQGLKHLFQHQRRRSSVSPHDVQQIQTDPEPEVDLDSQNACAEIDGVSTHPTALNRVLQQIRVPPKMKRGTSLHSRRGKSEAPKGSPQINRKSGQEVAAVIQSGRPRSSSTTDAPTSSSVMEIACAAGVCVPGEEATAERIERLEVSSLAQTSSAVASSTDGSIHTESVDGIPDPQRTKAAIAHLQQKILKLTEQIKIAQTARDDNVAEYLKLANSADKQQAARIKQVFEKKNQKSAQTILQLQKKLEHYHRKLREVEQNGIPRQPKDVFRDMHQGLKDVGAKVTGFSEGVVDSVKGGFSSFSQATHSAAGAVVSKPREIASLIRNKFGSADNIPNLKDSLEEGQVDDGGKALGVISNFQSSPKYGSEEDCSSATSGSVGANSTTGGIAVGASSSKTNTLDMQSSGFDALLHEVQEIRETQARLEDSFETLKEHYQRDYSLIMQTLQEERYRCERLEEQLNDLTELHQNEILNLKQELASMEEKIAYQSYERARDIQEALEACQTRISKMELQQQQQQVVQLEGLENATARNLLGKLINILLAVMAVLLVFVSTVANCVVPLMKTRNRTFSTLFLVAFIAFLWKHWDALFSYVDRLFSPPR.

Residue methionine 1 is modified to N-acetylmethionine. Disordered stretches follow at residues 1–37, 58–83, 110–166, and 197–222; these read MEPSGSEQLYEDPDPGGKSQDAEARRQTESEQKLSKM, HQRRRSSVSPHDVQQIQTDPEPEVDL, RVPP…PTSS, and LAQTSSAVASSTDGSIHTESVDGIPD. Residues 1 to 587 lie on the Cytoplasmic side of the membrane; sequence MEPSGSEQLY…ARNLLGKLIN (587 aa). Basic and acidic residues predominate over residues 20-34; that stretch reads QDAEARRQTESEQKL. The segment covering 64–75 has biased composition (polar residues); it reads SVSPHDVQQIQT. The segment covering 113–125 has biased composition (basic residues); that stretch reads PKMKRGTSLHSRR. A compositionally biased stretch (low complexity) spans 156–166; that stretch reads SSSTTDAPTSS. A compositionally biased stretch (polar residues) spans 197 to 214; the sequence is LAQTSSAVASSTDGSIHT. Positions 224–310 form a coiled coil; the sequence is QRTKAAIAHL…KLREVEQNGI (87 aa). Phosphoserine occurs at positions 378 and 410. A disordered region spans residues 411 to 433; it reads PKYGSEEDCSSATSGSVGANSTT. Residues 420–433 are compositionally biased toward polar residues; that stretch reads SSATSGSVGANSTT. Residues 457 to 566 are a coiled coil; the sequence is ALLHEVQEIR…KMELQQQQQQ (110 aa). 2 consecutive transmembrane segments (helical) span residues 588–608 and 621–641; these read ILLAVMAVLLVFVSTVANCVV and LFLVAFIAFLWKHWDALFSYV. At 642 to 649 the chain is on the cytoplasmic side; that stretch reads DRLFSPPR.

Belongs to the TEX28 family. As to quaternary structure, may form homodimers and heterodimers with TMCC2 or TMCC3 via the coiled-coil domains. Interacts with ribosomal proteins RPL4 and RPS6.

It is found in the endoplasmic reticulum membrane. In terms of biological role, endoplasmic reticulum membrane protein that promotes endoplasmic reticulum-associated endosome fission. Localizes to contact sites between the endoplasmic reticulum and endosomes and acts by promoting recruitment of the endoplasmic reticulum to endosome tubules for fission. Endosome membrane fission of early and late endosomes is essential to separate regions destined for lysosomal degradation from carriers to be recycled to the plasma membrane. The polypeptide is Transmembrane and coiled-coil domains protein 1 (Tmcc1) (Mus musculus (Mouse)).